The following is an 88-amino-acid chain: Small ribosomal subunit protein bS20 (88 aa).

It belongs to the bacterial ribosomal protein bS20 family.

Its function is as follows. Binds directly to 16S ribosomal RNA. In Oenococcus oeni (strain ATCC BAA-331 / PSU-1), this protein is Small ribosomal subunit protein bS20.